A 525-amino-acid polypeptide reads, in one-letter code: Peptide chain release factor 3 (525 aa).

Residues 9–276 (AKRRTFAIIS…GFTRYAPAPQ (268 aa)) form the tr-type G domain. Residues 18-25 (SHPDAGKT), 86-90 (DTPGH), and 140-143 (NKFD) each bind GTP.

Belongs to the TRAFAC class translation factor GTPase superfamily. Classic translation factor GTPase family. PrfC subfamily.

The protein resides in the cytoplasm. Its function is as follows. Increases the formation of ribosomal termination complexes and stimulates activities of RF-1 and RF-2. It binds guanine nucleotides and has strong preference for UGA stop codons. It may interact directly with the ribosome. The stimulation of RF-1 and RF-2 is significantly reduced by GTP and GDP, but not by GMP. The protein is Peptide chain release factor 3 of Francisella tularensis subsp. tularensis (strain WY96-3418).